The sequence spans 334 residues: Phosphoribosylformylglycinamidine cyclo-ligase (334 aa).

Belongs to the AIR synthase family.

It localises to the cytoplasm. It catalyses the reaction 2-formamido-N(1)-(5-O-phospho-beta-D-ribosyl)acetamidine + ATP = 5-amino-1-(5-phospho-beta-D-ribosyl)imidazole + ADP + phosphate + H(+). The protein operates within purine metabolism; IMP biosynthesis via de novo pathway; 5-amino-1-(5-phospho-D-ribosyl)imidazole from N(2)-formyl-N(1)-(5-phospho-D-ribosyl)glycinamide: step 2/2. This chain is Phosphoribosylformylglycinamidine cyclo-ligase, found in Pyrococcus abyssi (strain GE5 / Orsay).